A 256-amino-acid polypeptide reads, in one-letter code: Thiazole synthase (256 aa).

K95 (schiff-base intermediate with DXP) is an active-site residue. Residues G156, 182 to 183, and 204 to 205 each bind 1-deoxy-D-xylulose 5-phosphate; these read AG and NT.

The protein belongs to the ThiG family. Homotetramer. Forms heterodimers with either ThiH or ThiS.

It localises to the cytoplasm. It carries out the reaction [ThiS sulfur-carrier protein]-C-terminal-Gly-aminoethanethioate + 2-iminoacetate + 1-deoxy-D-xylulose 5-phosphate = [ThiS sulfur-carrier protein]-C-terminal Gly-Gly + 2-[(2R,5Z)-2-carboxy-4-methylthiazol-5(2H)-ylidene]ethyl phosphate + 2 H2O + H(+). It functions in the pathway cofactor biosynthesis; thiamine diphosphate biosynthesis. Catalyzes the rearrangement of 1-deoxy-D-xylulose 5-phosphate (DXP) to produce the thiazole phosphate moiety of thiamine. Sulfur is provided by the thiocarboxylate moiety of the carrier protein ThiS. In vitro, sulfur can be provided by H(2)S. This chain is Thiazole synthase, found in Klebsiella pneumoniae (strain 342).